A 337-amino-acid polypeptide reads, in one-letter code: Holliday junction branch migration complex subunit RuvB (337 aa).

The tract at residues 4-184 (ADRLIEPIAS…FGIVQRLEFY (181 aa)) is large ATPase domain (RuvB-L). Residues isoleucine 23, arginine 24, glycine 65, lysine 68, threonine 69, threonine 70, 131 to 133 (EDY), arginine 174, tyrosine 184, and arginine 221 each bind ATP. Threonine 69 provides a ligand contact to Mg(2+). The segment at 185–255 (NVADLSTIVS…TAAAALDMLE (71 aa)) is small ATPAse domain (RuvB-S). The interval 258–337 (SEGFDIMDRK…FGITKDQTKD (80 aa)) is head domain (RuvB-H). The DNA site is built by arginine 294, arginine 313, and arginine 318.

The protein belongs to the RuvB family. In terms of assembly, homohexamer. Forms an RuvA(8)-RuvB(12)-Holliday junction (HJ) complex. HJ DNA is sandwiched between 2 RuvA tetramers; dsDNA enters through RuvA and exits via RuvB. An RuvB hexamer assembles on each DNA strand where it exits the tetramer. Each RuvB hexamer is contacted by two RuvA subunits (via domain III) on 2 adjacent RuvB subunits; this complex drives branch migration. In the full resolvosome a probable DNA-RuvA(4)-RuvB(12)-RuvC(2) complex forms which resolves the HJ.

The protein resides in the cytoplasm. The enzyme catalyses ATP + H2O = ADP + phosphate + H(+). Functionally, the RuvA-RuvB-RuvC complex processes Holliday junction (HJ) DNA during genetic recombination and DNA repair, while the RuvA-RuvB complex plays an important role in the rescue of blocked DNA replication forks via replication fork reversal (RFR). RuvA specifically binds to HJ cruciform DNA, conferring on it an open structure. The RuvB hexamer acts as an ATP-dependent pump, pulling dsDNA into and through the RuvAB complex. RuvB forms 2 homohexamers on either side of HJ DNA bound by 1 or 2 RuvA tetramers; 4 subunits per hexamer contact DNA at a time. Coordinated motions by a converter formed by DNA-disengaged RuvB subunits stimulates ATP hydrolysis and nucleotide exchange. Immobilization of the converter enables RuvB to convert the ATP-contained energy into a lever motion, pulling 2 nucleotides of DNA out of the RuvA tetramer per ATP hydrolyzed, thus driving DNA branch migration. The RuvB motors rotate together with the DNA substrate, which together with the progressing nucleotide cycle form the mechanistic basis for DNA recombination by continuous HJ branch migration. Branch migration allows RuvC to scan DNA until it finds its consensus sequence, where it cleaves and resolves cruciform DNA. The polypeptide is Holliday junction branch migration complex subunit RuvB (Colwellia psychrerythraea (strain 34H / ATCC BAA-681) (Vibrio psychroerythus)).